A 699-amino-acid polypeptide reads, in one-letter code: Elongation factor G (699 aa).

The tr-type G domain occupies 8–288 (EDYRNFGIMA…AVVDYLPSPV (281 aa)). GTP contacts are provided by residues 17–24 (AHIDAGKT), 86–90 (DTPGH), and 140–143 (NKMD).

This sequence belongs to the TRAFAC class translation factor GTPase superfamily. Classic translation factor GTPase family. EF-G/EF-2 subfamily.

The protein localises to the cytoplasm. Functionally, catalyzes the GTP-dependent ribosomal translocation step during translation elongation. During this step, the ribosome changes from the pre-translocational (PRE) to the post-translocational (POST) state as the newly formed A-site-bound peptidyl-tRNA and P-site-bound deacylated tRNA move to the P and E sites, respectively. Catalyzes the coordinated movement of the two tRNA molecules, the mRNA and conformational changes in the ribosome. This is Elongation factor G from Sinorhizobium medicae (strain WSM419) (Ensifer medicae).